We begin with the raw amino-acid sequence, 209 residues long: Mitochondrial import inner membrane translocase subunit Tim23 (209 aa).

The next 3 membrane-spanning stretches (helical) occupy residues phenylalanine 73 to methionine 93, alanine 125 to isoleucine 145, and glycine 181 to tryptophan 197.

It belongs to the Tim17/Tim22/Tim23 family. Component of the TIM23 complex at least composed of TIMM23, TIMM17 (TIMM17A or TIMM17B) and TIMM50; within this complex, directly interacts with TIMM50. The complex interacts with the TIMM44 component of the PAM complex and with DNAJC15. Upon mitochondrial depolarization, interacts with PINK1; the interaction is required for PINK1 accumulation at the outer mitochondrial membrane, kinase activation by autophosphorylation and PRKN recruitement to mitochondria.

The protein localises to the mitochondrion inner membrane. Functionally, essential component of the TIM23 complex, a complex that mediates the translocation of transit peptide-containing proteins across the mitochondrial inner membrane. Has a role in the activation of stress-induced mitophagy by protecting PINK1 from OMA1-mediated degradation and facilitating its accumulation at the outer mitochondrial membrane in response to depolarization. The chain is Mitochondrial import inner membrane translocase subunit Tim23 (TIMM23) from Homo sapiens (Human).